Reading from the N-terminus, the 158-residue chain is Transcription elongation factor GreB (158 aa).

A coiled-coil region spans residues 53-75 (KRRLREIDRRVRFLTKRLEVLQI).

Belongs to the GreA/GreB family. GreB subfamily.

In terms of biological role, necessary for efficient RNA polymerase transcription elongation past template-encoded arresting sites. The arresting sites in DNA have the property of trapping a certain fraction of elongating RNA polymerases that pass through, resulting in locked ternary complexes. Cleavage of the nascent transcript by cleavage factors such as GreA or GreB allows the resumption of elongation from the new 3'terminus. GreB releases sequences of up to 9 nucleotides in length. In Haemophilus influenzae (strain ATCC 51907 / DSM 11121 / KW20 / Rd), this protein is Transcription elongation factor GreB.